The sequence spans 163 residues: Nucleotide-binding protein BC_1159 (163 aa).

This sequence belongs to the YajQ family.

Nucleotide-binding protein. The chain is Nucleotide-binding protein BC_1159 from Bacillus cereus (strain ATCC 14579 / DSM 31 / CCUG 7414 / JCM 2152 / NBRC 15305 / NCIMB 9373 / NCTC 2599 / NRRL B-3711).